The following is a 272-amino-acid chain: Elongation factor Ts (272 aa).

An involved in Mg(2+) ion dislocation from EF-Tu region spans residues 76–79 (TDFV).

It belongs to the EF-Ts family.

It localises to the cytoplasm. Its function is as follows. Associates with the EF-Tu.GDP complex and induces the exchange of GDP to GTP. It remains bound to the aminoacyl-tRNA.EF-Tu.GTP complex up to the GTP hydrolysis stage on the ribosome. The sequence is that of Elongation factor Ts from Corynebacterium urealyticum (strain ATCC 43042 / DSM 7109).